A 121-amino-acid polypeptide reads, in one-letter code: UPF0102 protein VP0448 (121 aa).

It belongs to the UPF0102 family.

The protein is UPF0102 protein VP0448 of Vibrio parahaemolyticus serotype O3:K6 (strain RIMD 2210633).